Consider the following 116-residue polypeptide: G antigen 2B/2C (116 aa).

The interval 1–116 is disordered; that stretch reads MSWRGRSTYR…PEEGEKQSQC (116 aa). Composition is skewed to acidic residues over residues 31-44 and 86-95; these read FSDE…EEGE and ECEDGPDGQE. A compositionally biased stretch (basic and acidic residues) spans 102–116; that stretch reads EEVKTPEEGEKQSQC.

It belongs to the GAGE family. As to expression, expressed in a variety of tumor tissues but not in normal tissues, except testis.

Antigen, recognized on melanoma by autologous cytolytic T-lymphocytes. This chain is G antigen 2B/2C (GAGE2B), found in Homo sapiens (Human).